The chain runs to 717 residues: MEEIDKSISFDGRDIRLKVGLFAPQAGGAVMIESGDTAVLVTATTAKGREGIDFLPLLVDYEERLYAGGKIPGGFLRREGRPPEKVTLTSRLIDRPLRPLFPSWLRDDIQIVATTLSMDEEVPPDVLAVTGSSVAVLLAKLPFYGPMAAVRVGLVGDDFIINPTYREVKNGDLDLVVAGSPQGVIMVEAGANQLPEQDIIEAIDFGYEAVCDLIQAQREIIAEMGIELVELEPPEVDPTLENYIKEKATEQIKEILSQYDLDKNQRDEKLDEIKDSLAESITELPEEEAVRAMVESESMLLGNAFKSVTKKLMRQQIVAEGIRVDGRKLDEVRPVSCRVGVLPSRVHGSSLFNRGLTQVMSAVTLGTPGDAQELADDLHPQDEKRYLHHYNFPPFSVGETKPLRQPGRREIGHGALAERALIPVIPKSDIFPYVIRVVSEVLSSNGSTSMGSVCASTLGLMDAGVPIVKPVSGAAMGLIKEDEEVRILTDIQGIEDFLGDMDFKVAGTDSGITALQMDMKITGLPIEVIADAIHQAKPARIHILDKMLSVLDLPRPDMSPYAPRLLSFKIDPEMIGLVIGPGGKTIKGITEETGVKIDIDDDGTVTIAAADGEKAKQACNIIQGMTKKLNPGDVYVGRVTRIIPIGAFVEVFAGKEGMVHISQIADYRVGKVEDELAIGDEVIVKVREIDSKGRVNLTRLNIHPDEAAAARANAMNY.

Residues Asp-496 and Asp-502 each contribute to the Mg(2+) site. One can recognise a KH domain in the interval 563–622; that stretch reads PRLLSFKIDPEMIGLVIGPGGKTIKGITEETGVKIDIDDDGTVTIAAADGEKAKQACNII. In terms of domain architecture, S1 motif spans 632-700; the sequence is GDVYVGRVTR…SKGRVNLTRL (69 aa).

The protein belongs to the polyribonucleotide nucleotidyltransferase family. The cofactor is Mg(2+).

Its subcellular location is the cytoplasm. It catalyses the reaction RNA(n+1) + phosphate = RNA(n) + a ribonucleoside 5'-diphosphate. Involved in mRNA degradation. Catalyzes the phosphorolysis of single-stranded polyribonucleotides processively in the 3'- to 5'-direction. The polypeptide is Polyribonucleotide nucleotidyltransferase (Trichodesmium erythraeum (strain IMS101)).